The following is a 200-amino-acid chain: MAGAAGPEIERLIQLLARLPGLGPRSARRAALHLIKKRDALMAPLASALQVAIDKIEVCSTCGNIDSQNPCTVCTDPRRDSSIIVVVADVADLWALERASATNGRYHVLGATLSPLDGVGPEDLTIDALVKRAHDPGVAEIILALNATVDGQTTAHYVTDLLQDANVKVTRLAHGVPVGGELDYLDEGTLSAAMRQRTLF.

Residues 59 to 74 (CSTCGNIDSQNPCTVC) form a C4-type zinc finger. Residues 82 to 177 (SIIVVVADVA…KVTRLAHGVP (96 aa)) form the Toprim domain.

This sequence belongs to the RecR family.

Its function is as follows. May play a role in DNA repair. It seems to be involved in an RecBC-independent recombinational process of DNA repair. It may act with RecF and RecO. This is Recombination protein RecR from Rhodopseudomonas palustris (strain ATCC BAA-98 / CGA009).